Reading from the N-terminus, the 188-residue chain is dCTP deaminase (188 aa).

Residues 111–116 (KSTYAR), 135–137 (TLE), Gln-156, Tyr-170, and Gln-180 each bind dCTP. Glu-137 functions as the Proton donor/acceptor in the catalytic mechanism.

This sequence belongs to the dCTP deaminase family. Homotrimer.

It carries out the reaction dCTP + H2O + H(+) = dUTP + NH4(+). The protein operates within pyrimidine metabolism; dUMP biosynthesis; dUMP from dCTP (dUTP route): step 1/2. Functionally, catalyzes the deamination of dCTP to dUTP. The chain is dCTP deaminase from Cupriavidus metallidurans (strain ATCC 43123 / DSM 2839 / NBRC 102507 / CH34) (Ralstonia metallidurans).